We begin with the raw amino-acid sequence, 132 residues long: Fatty acid-binding protein, brain (132 aa).

An N-acetylvaline modification is found at V2. 127-129 serves as a coordination point for a fatty acid; sequence RHY.

The protein belongs to the calycin superfamily. Fatty-acid binding protein (FABP) family.

It is found in the cytoplasm. FABPs are thought to play a role in the intracellular transport of long-chain fatty acids and their acyl-CoA esters. The protein is Fatty acid-binding protein, brain (FABP7) of Gallus gallus (Chicken).